A 93-amino-acid polypeptide reads, in one-letter code: Alpha-defensin 22 (93 aa).

The signal sequence occupies residues 1–19; that stretch reads MKKLVLLSALVLLAYQVQT. Residues 20–58 constitute a propeptide that is removed on maturation; sequence DPIQNTDEETNTEEQPGEEDQAVSVSFGGQEGSALHEKL. Positions 22–41 are disordered; that stretch reads IQNTDEETNTEEQPGEEDQA. The segment covering 25 to 40 has biased composition (acidic residues); that stretch reads TDEETNTEEQPGEEDQ. 3 cysteine pairs are disulfide-bonded: cysteine 64/cysteine 89, cysteine 66/cysteine 81, and cysteine 71/cysteine 88.

It belongs to the alpha-defensin family.

Its subcellular location is the secreted. Functionally, may have microbicidal activities. The sequence is that of Alpha-defensin 22 (Defa22) from Mus musculus (Mouse).